Reading from the N-terminus, the 219-residue chain is uncharacterized protein (219 aa).

The HD domain occupies Gln57–Leu158.

This is an uncharacterized protein from Acanthamoeba polyphaga mimivirus (APMV).